Consider the following 184-residue polypeptide: Large ribosomal subunit protein eL18 (184 aa).

This sequence belongs to the eukaryotic ribosomal protein eL18 family.

It localises to the cytoplasm. The sequence is that of Large ribosomal subunit protein eL18 (RPL18) from Theileria parva (East coast fever infection agent).